The following is a 26-amino-acid chain: Alpha-amylase inhibitor 1 (26 aa).

It belongs to the protease inhibitor I6 (cereal trypsin/alpha-amylase inhibitor) family.

It is found in the secreted. Functionally, alpha-amylase inhibitor. In Saussurea costus (Costus), this protein is Alpha-amylase inhibitor 1.